Reading from the N-terminus, the 289-residue chain is Lipoyl synthase 1 (289 aa).

C33, C38, C44, C59, C63, C66, and S274 together coordinate [4Fe-4S] cluster. The 219-residue stretch at 45–263 folds into the Radical SAM core domain; the sequence is FAGGTATFLI…RIGEEELGFL (219 aa).

This sequence belongs to the radical SAM superfamily. Lipoyl synthase family. The cofactor is [4Fe-4S] cluster.

Its subcellular location is the cytoplasm. It catalyses the reaction [[Fe-S] cluster scaffold protein carrying a second [4Fe-4S](2+) cluster] + N(6)-octanoyl-L-lysyl-[protein] + 2 oxidized [2Fe-2S]-[ferredoxin] + 2 S-adenosyl-L-methionine + 4 H(+) = [[Fe-S] cluster scaffold protein] + N(6)-[(R)-dihydrolipoyl]-L-lysyl-[protein] + 4 Fe(3+) + 2 hydrogen sulfide + 2 5'-deoxyadenosine + 2 L-methionine + 2 reduced [2Fe-2S]-[ferredoxin]. It functions in the pathway protein modification; protein lipoylation via endogenous pathway; protein N(6)-(lipoyl)lysine from octanoyl-[acyl-carrier-protein]: step 2/2. In terms of biological role, catalyzes the radical-mediated insertion of two sulfur atoms into the C-6 and C-8 positions of the octanoyl moiety bound to the lipoyl domains of lipoate-dependent enzymes, thereby converting the octanoylated domains into lipoylated derivatives. The chain is Lipoyl synthase 1 from Parasynechococcus marenigrum (strain WH8102).